Reading from the N-terminus, the 456-residue chain is Argininosuccinate lyase (456 aa).

The protein belongs to the lyase 1 family. Argininosuccinate lyase subfamily.

Its subcellular location is the cytoplasm. The enzyme catalyses 2-(N(omega)-L-arginino)succinate = fumarate + L-arginine. It participates in amino-acid biosynthesis; L-arginine biosynthesis; L-arginine from L-ornithine and carbamoyl phosphate: step 3/3. The polypeptide is Argininosuccinate lyase (Listeria monocytogenes serovar 1/2a (strain ATCC BAA-679 / EGD-e)).